Here is a 531-residue protein sequence, read N- to C-terminus: Methyl-accepting chemotaxis protein McpN (531 aa).

Topologically, residues 1–24 are cytoplasmic; that stretch reads MNESVARVFDRILRGLGLKTLNAQ. Residues 25–45 traverse the membrane as a helical segment; it reads FLLSYALMFGLAACASVALYL. Topologically, residues 46–174 are periplasmic; that stretch reads SMSISPETIN…LMSARADSVQ (129 aa). The segment at 52 to 140 is pilJ-type; that stretch reads ETINVAGAQR…AMLDQVAQPA (89 aa). The N-box signature appears at 54–65; it reads INVAGAQRMLSQ. Arg-61 contacts nitrate. A helical transmembrane segment spans residues 175 to 195; sequence HTQMWIAFGCLLAILVLVVLG. The Cytoplasmic portion of the chain corresponds to 196–531; that stretch reads RQFGLAPLMR…LRVVLGRFRT (336 aa). The HAMP domain occupies 201 to 254; sequence APLMRQLRGLEVALTEVGAANFTHALAAGHADNEIGRIVAGYERMRQDVSGLLA. A Methyl-accepting transducer domain is found at 259–495; the sequence is SAAETDKDVA…DIDRNITNVS (237 aa).

It belongs to the methyl-accepting chemotaxis (MCP) protein family. Ligand free ligand-binding domain (LBD) is present in a monomer-dimer equilibrium. Nitrate binding to the periplasmic LBD stabilizes the homodimer.

The protein localises to the cell inner membrane. Chemotactic-signal transducers respond to changes in the concentration of attractants and repellents in the environment, transduce a signal from the outside to the inside of the cell, and facilitate sensory adaptation through the variation of the level of methylation. McpN is a chemoreceptor that recognizes specifically nitrate and mediates chemoattraction. Binds nitrate specifically and shows no affinity for other ligands such as nitrite. McpN-mediated taxis occurs only under nitrate starvation conditions. The chain is Methyl-accepting chemotaxis protein McpN from Pseudomonas aeruginosa (strain ATCC 15692 / DSM 22644 / CIP 104116 / JCM 14847 / LMG 12228 / 1C / PRS 101 / PAO1).